The following is a 524-amino-acid chain: Hydroxysteroid dehydrogenase-like protein 2 (524 aa).

NADP(+)-binding positions include 17–23 (GASRGIG), K42, and D74. K42 carries the post-translational modification N6-(2-hydroxyisobutyryl)lysine. An N6-acetyllysine modification is found at K116. Y168 functions as the Proton acceptor in the catalytic mechanism. Residue K172 participates in NADP(+) binding. The segment covering 283–300 (EEKESYDPVPEVKEEKLQ) has biased composition (basic and acidic residues). A disordered region spans residues 283-410 (EEKESYDPVP…PLLQSVLPPK (128 aa)). Residues 301–391 (LQEQPQLQEQ…QQQPQQRPQQ (91 aa)) are compositionally biased toward low complexity. Residues 414 to 521 (GAVEETFRIV…KLEKLMTHMN (108 aa)) form the SCP2 domain. K424 carries the post-translational modification N6-succinyllysine.

This sequence belongs to the short-chain dehydrogenases/reductases (SDR) family.

It localises to the peroxisome. Its subcellular location is the mitochondrion. In terms of biological role, has apparently no steroid dehydrogenase activity. Controls bile acid (BA) and lipid metabolism in response to nutritional cues. This Rattus norvegicus (Rat) protein is Hydroxysteroid dehydrogenase-like protein 2 (Hsdl2).